Here is a 79-residue protein sequence, read N- to C-terminus: RNA-binding protein KhpA (79 aa).

A KH domain is found at 32 to 79 (TVVIELRVDPAELGKVIGKQGRIARALRTILTAIGRKIGKRVVLEILE).

This sequence belongs to the KhpA RNA-binding protein family.

The protein localises to the cytoplasm. Functionally, a probable RNA-binding protein. In Aquifex aeolicus (strain VF5), this protein is RNA-binding protein KhpA.